The sequence spans 279 residues: MKLKLYLIPLLASGIILSACSSTTSQVISSLSSAQKYFEANKGELNKNNVINILKDGYNSDPNKTVNALLAGWKYTLMDQKLLENNLDPSRFKNTFGPNKNKDDVTPNISEKGLFLNETFTGLGSQIAEVFNVQKQIVSGFSYSWTSPKSFKVNIHIKMEGMINEKSKETIKSFLSNKDSNGSNSVEESEYTGDKAKFTADFIFSYTPPTGGTRSLTDKSFDVITNMINFPADVKIDVNTSHNKLNELLEKNDQVKRMKSRTFNGRNIDLLPFFYYALL.

The first 19 residues, 1–19 (MKLKLYLIPLLASGIILSA), serve as a signal peptide directing secretion. Cys20 carries N-palmitoyl cysteine lipidation. A lipid anchor (S-diacylglycerol cysteine) is attached at Cys20.

It belongs to the MG439/MG440 family.

It is found in the cell membrane. This is an uncharacterized protein from Mycoplasma pneumoniae (strain ATCC 29342 / M129 / Subtype 1) (Mycoplasmoides pneumoniae).